The sequence spans 566 residues: CTP synthase (566 aa).

The interval 1-270 is amidoligase domain; the sequence is MTKFVFVTGG…DGLICDKLRL (270 aa). Serine 13 contacts CTP. A UTP-binding site is contributed by serine 13. Residues 14–19 and aspartate 71 contribute to the ATP site; that span reads SLGKGI. Residues aspartate 71 and glutamate 144 each coordinate Mg(2+). CTP is bound by residues 151 to 153, 191 to 196, and lysine 227; these read DIE and KTKPTQ. Residues 191 to 196 and lysine 227 each bind UTP; that span reads KTKPTQ. One can recognise a Glutamine amidotransferase type-1 domain in the interval 295–547; it reads SIAMVGKYVD…IAATLEQRSA (253 aa). Residue glycine 356 participates in L-glutamine binding. Cysteine 383 serves as the catalytic Nucleophile; for glutamine hydrolysis. L-glutamine contacts are provided by residues 384–387, glutamate 407, and arginine 473; that span reads LGMQ. Active-site residues include histidine 520 and glutamate 522.

The protein belongs to the CTP synthase family. In terms of assembly, homotetramer.

It carries out the reaction UTP + L-glutamine + ATP + H2O = CTP + L-glutamate + ADP + phosphate + 2 H(+). It catalyses the reaction L-glutamine + H2O = L-glutamate + NH4(+). The enzyme catalyses UTP + NH4(+) + ATP = CTP + ADP + phosphate + 2 H(+). It functions in the pathway pyrimidine metabolism; CTP biosynthesis via de novo pathway; CTP from UDP: step 2/2. Its activity is regulated as follows. Allosterically activated by GTP, when glutamine is the substrate; GTP has no effect on the reaction when ammonia is the substrate. The allosteric effector GTP functions by stabilizing the protein conformation that binds the tetrahedral intermediate(s) formed during glutamine hydrolysis. Inhibited by the product CTP, via allosteric rather than competitive inhibition. Its function is as follows. Catalyzes the ATP-dependent amination of UTP to CTP with either L-glutamine or ammonia as the source of nitrogen. Regulates intracellular CTP levels through interactions with the four ribonucleotide triphosphates. This chain is CTP synthase, found in Polaromonas naphthalenivorans (strain CJ2).